The following is a 416-amino-acid chain: STAM-binding protein-like (416 aa).

The tract at residues 214–244 is disordered; the sequence is SYGTVQPHPPAVDRSLKPSSYGSNSSGVTSD. Over residues 230 to 243 the composition is skewed to low complexity; the sequence is KPSSYGSNSSGVTS. Residues 249 to 380 enclose the MPN domain; that stretch reads VKIPRDVCCK…LTDYGMKEIG (132 aa). Residues histidine 327, histidine 329, aspartate 340, histidine 342, cysteine 382, histidine 388, and histidine 390 each contribute to the Zn(2+) site. Positions 327-340 match the JAMM motif motif; it reads HTHPTQTAFLSSVD.

The protein belongs to the peptidase M67C family. The cofactor is Zn(2+).

Zinc metalloprotease that specifically cleaves 'Lys-63'-linked polyubiquitin chains. Does not cleave 'Lys-48'-linked polyubiquitin chains. Functions at the endosome and is able to oppose the ubiquitin-dependent sorting of receptors to lysosomes. This Xenopus laevis (African clawed frog) protein is STAM-binding protein-like (stambp).